The chain runs to 590 residues: Arginine--tRNA ligase (590 aa).

A 'HIGH' region motif is present at residues 126-136; sequence PNVAKEMHVGH.

It belongs to the class-I aminoacyl-tRNA synthetase family. As to quaternary structure, monomer.

It is found in the cytoplasm. It catalyses the reaction tRNA(Arg) + L-arginine + ATP = L-arginyl-tRNA(Arg) + AMP + diphosphate. This is Arginine--tRNA ligase from Streptomyces avermitilis (strain ATCC 31267 / DSM 46492 / JCM 5070 / NBRC 14893 / NCIMB 12804 / NRRL 8165 / MA-4680).